Consider the following 764-residue polypeptide: Cyclin-F (764 aa).

Positions 19 to 27 (RKRVRKRAS) match the Nuclear localization signal 1 motif. One can recognise an F-box domain in the interval 28–75 (AVSLLSLPEELLVFVLQCLSAEDLLSVRAVHSHLCDIIDTNASIWARV). Residues 307–404 (TKRYILVDWL…EVISVLDGKI (98 aa)) enclose the Cyclin N-terminal domain. A D box 1 motif is present at residues 309–312 (RYIL). The short motif at 570–575 (SSKRRR) is the Nuclear localization signal 2 element. Residues 583-738 (RGAFVATPTA…PSQRIRRQVK (156 aa)) are PEST. The tract at residues 662-754 (CEEDEQEPPT…HSAGEAEQED (93 aa)) is disordered. The span at 682–692 (SSSSTSSSSSS) shows a compositional bias: low complexity. A compositionally biased stretch (polar residues) spans 702–722 (SGYSSIQSFPSPTGSSALVSP). Residues 732–742 (RIRRQVKRKNT) are compositionally biased toward basic residues.

It belongs to the cyclin family. Cyclin AB subfamily. In terms of assembly, component of the SCF(CCNF) complex. Expressed in the brain.

The protein localises to the nucleus. It localises to the cytoplasm. Its subcellular location is the perinuclear region. The protein resides in the cytoskeleton. It is found in the microtubule organizing center. The protein localises to the centrosome. It localises to the centriole. In terms of biological role, substrate recognition component of a SCF (SKP1-CUL1-F-box protein) E3 ubiquitin-protein ligase complex which mediates the ubiquitination and subsequent proteasomal degradation of target proteins. The SCF(CCNF) E3 ubiquitin-protein ligase complex is an integral component of the ubiquitin proteasome system (UPS) and links proteasome degradation to the cell cycle. Mediates the substrate recognition and the proteasomal degradation of various target proteins during G2 phase involved in the regulation of cell cycle progression and in the maintenance of genome stability. May play a role in motor neuron development and axonal outgrowth. The protein is Cyclin-F (ccnf) of Danio rerio (Zebrafish).